Reading from the N-terminus, the 111-residue chain is Holo-[acyl-carrier-protein] synthase (111 aa).

Mg(2+) contacts are provided by aspartate 8 and glutamate 57.

This sequence belongs to the P-Pant transferase superfamily. AcpS family. It depends on Mg(2+) as a cofactor.

The protein localises to the cytoplasm. It carries out the reaction apo-[ACP] + CoA = holo-[ACP] + adenosine 3',5'-bisphosphate + H(+). In terms of biological role, transfers the 4'-phosphopantetheine moiety from coenzyme A to a Ser of acyl-carrier-protein. The chain is Holo-[acyl-carrier-protein] synthase from Mycoplasmoides gallisepticum (strain R(low / passage 15 / clone 2)) (Mycoplasma gallisepticum).